The sequence spans 367 residues: Putative threonine-phosphate decarboxylase (367 aa).

O-phospho-L-threonine is bound by residues 12–13 (HG), Asn29, and Asn152. Residue Lys213 is modified to N6-(pyridoxal phosphate)lysine. Arg320 and Arg334 together coordinate O-phospho-L-threonine.

The protein belongs to the class-II pyridoxal-phosphate-dependent aminotransferase family. Pyridoxal 5'-phosphate serves as cofactor.

The catalysed reaction is O-phospho-L-threonine + H(+) = (R)-1-aminopropan-2-yl phosphate + CO2. It functions in the pathway cofactor biosynthesis; adenosylcobalamin biosynthesis. Decarboxylates L-threonine-O-3-phosphate to yield (R)-1-amino-2-propanol O-2-phosphate, the precursor for the linkage between the nucleotide loop and the corrin ring in cobalamin. This is Putative threonine-phosphate decarboxylase (cobD) from Caldanaerobacter subterraneus subsp. tengcongensis (strain DSM 15242 / JCM 11007 / NBRC 100824 / MB4) (Thermoanaerobacter tengcongensis).